Reading from the N-terminus, the 227-residue chain is Phosphoribosylformylglycinamidine synthase subunit PurQ (227 aa).

A Glutamine amidotransferase type-1 domain is found at 3 to 225 (FAVIVFPGSN…LKQWRETYVV (223 aa)). Cys-86 functions as the Nucleophile in the catalytic mechanism. Catalysis depends on residues His-194 and Glu-196.

Part of the FGAM synthase complex composed of 1 PurL, 1 PurQ and 2 PurS subunits.

The protein resides in the cytoplasm. It carries out the reaction N(2)-formyl-N(1)-(5-phospho-beta-D-ribosyl)glycinamide + L-glutamine + ATP + H2O = 2-formamido-N(1)-(5-O-phospho-beta-D-ribosyl)acetamidine + L-glutamate + ADP + phosphate + H(+). It catalyses the reaction L-glutamine + H2O = L-glutamate + NH4(+). Its pathway is purine metabolism; IMP biosynthesis via de novo pathway; 5-amino-1-(5-phospho-D-ribosyl)imidazole from N(2)-formyl-N(1)-(5-phospho-D-ribosyl)glycinamide: step 1/2. Part of the phosphoribosylformylglycinamidine synthase complex involved in the purines biosynthetic pathway. Catalyzes the ATP-dependent conversion of formylglycinamide ribonucleotide (FGAR) and glutamine to yield formylglycinamidine ribonucleotide (FGAM) and glutamate. The FGAM synthase complex is composed of three subunits. PurQ produces an ammonia molecule by converting glutamine to glutamate. PurL transfers the ammonia molecule to FGAR to form FGAM in an ATP-dependent manner. PurS interacts with PurQ and PurL and is thought to assist in the transfer of the ammonia molecule from PurQ to PurL. This is Phosphoribosylformylglycinamidine synthase subunit PurQ from Bacillus cereus (strain B4264).